A 165-amino-acid chain; its full sequence is Destrin (165 aa).

Position 2 is an N-acetylalanine (Ala-2). Phosphoserine is present on Ser-3. The region spanning 4–153 (GVQVADEVCR…NRACIAEKLG (150 aa)) is the ADF-H domain. N6-acetyllysine is present on Lys-19. Residues 30–34 (KKRKK) carry the Nuclear localization signal motif.

This sequence belongs to the actin-binding proteins ADF family. In terms of processing, ISGylated.

Its function is as follows. Actin-depolymerizing protein. Severs actin filaments (F-actin) and binds to actin monomers (G-actin). Acts in a pH-independent manner. This is Destrin (DSTN) from Bos taurus (Bovine).